The sequence spans 148 residues: Large ribosomal subunit protein bL9 (148 aa).

Belongs to the bacterial ribosomal protein bL9 family.

Functionally, binds to the 23S rRNA. The sequence is that of Large ribosomal subunit protein bL9 from Methylococcus capsulatus (strain ATCC 33009 / NCIMB 11132 / Bath).